Consider the following 350-residue polypeptide: MEIKGLRKIEPYVAGSQPAEKNIIKLNTNENAYGPSPAVHQALASFDAHQLRKYSTLDQTALRQALSDQLGVPTDQFIIGNGSDDILSMAFLAFFNSEEKIIFPDLTYGFYKVWADLYRIPFREVPLTSSFEIDTQDYLVENGGIILTNPNAPTGIYKPLDQVEEIVKANQSVVVIIDESYINFGGETALPLLEKYDNVFITRTFSKDASLAGLRVGYGIGSPKLMAVINAVKNSVNPYNVDSIAEALGTAAVRSWDYYEDICAKIMATRDWFSQELQAIGFDVLPSKTNFVLVKPYGVTAGQLFAYLQSKKIYVRYFPKVERISDRLRISIGTQDEMERVLMTIQELQA.

An N6-(pyridoxal phosphate)lysine modification is found at K207.

The protein belongs to the class-II pyridoxal-phosphate-dependent aminotransferase family. Histidinol-phosphate aminotransferase subfamily. Homodimer. It depends on pyridoxal 5'-phosphate as a cofactor.

It catalyses the reaction L-histidinol phosphate + 2-oxoglutarate = 3-(imidazol-4-yl)-2-oxopropyl phosphate + L-glutamate. It functions in the pathway amino-acid biosynthesis; L-histidine biosynthesis; L-histidine from 5-phospho-alpha-D-ribose 1-diphosphate: step 7/9. This chain is Histidinol-phosphate aminotransferase, found in Streptococcus thermophilus (strain ATCC BAA-491 / LMD-9).